A 508-amino-acid polypeptide reads, in one-letter code: Aldehyde dehydrogenase (508 aa).

Active-site residues include glutamate 264 and cysteine 303.

It belongs to the aldehyde dehydrogenase family.

It carries out the reaction acetaldehyde + NAD(+) + H2O = acetate + NADH + 2 H(+). It participates in organosulfur degradation. Functionally, catalyzes the NAD(+)-dependent oxidation of acetaldehyde to acetate. This is Aldehyde dehydrogenase from Paracoccus denitrificans (strain Pd 1222).